Here is a 548-residue protein sequence, read N- to C-terminus: ETS domain-containing transcription factor ERF (548 aa).

A phosphothreonine mark is found at Thr-3 and Thr-7. Ser-20 and Ser-24 each carry phosphoserine. Residues 27–107 constitute a DNA-binding region (ETS); it reads IQLWHFILEL…KGKRFTYKFN (81 aa). Disordered stretches follow at residues 130 to 169, 184 to 225, and 280 to 304; these read QSAP…SSSS, GSVS…LARL, and SPTL…SHFS. Residues Ser-185 and Ser-190 each carry the phosphoserine modification. Positions 289-301 are enriched in gly residues; the sequence is SGGGGPSGSGGGS. A Phosphoserine modification is found at Ser-327. The tract at residues 342–478 is disordered; it reads PQRPDKCPLP…GEAPGASQCM (137 aa). Residues 348 to 361 show a composition bias toward pro residues; it reads CPLPPMAPETPPVP. Low complexity-rich tracts occupy residues 362–373 and 394–403; these read SSASSSSSSSSS and KAVAGADKSG. Phosphoserine occurs at positions 431 and 435. A compositionally biased stretch (acidic residues) spans 431–451; sequence SEGESEEVEVTDISDEDEEDG. Thr-441 bears the Phosphothreonine mark. Ser-444 is subject to Phosphoserine. Glycyl lysine isopeptide (Lys-Gly) (interchain with G-Cter in SUMO2) cross-links involve residues Lys-465, Lys-481, and Lys-512. A disordered region spans residues 492-548; sequence CRLEGGGGPAGGFEDEGEDKKVRGEGPGEAGGPLTPRRVSSDLQHATAQLSLEHRDS. At Thr-526 the chain carries Phosphothreonine; by MAPK1. Residues Ser-531, Ser-532, and Ser-548 each carry the phosphoserine modification. A compositionally biased stretch (polar residues) spans 532–541; sequence SDLQHATAQL.

The protein belongs to the ETS family. Phosphorylated by multiple kinases including MAPK1/ERK2 at THR-526. Phosphorylation regulates the activity of ERF. As to expression, highest levels in testis, ovary, pancreas, and heart.

It is found in the nucleus. Its function is as follows. Potent transcriptional repressor that binds to the H1 element of the Ets2 promoter. May regulate other genes involved in cellular proliferation. Required for extraembryonic ectoderm differentiation, ectoplacental cone cavity closure, and chorioallantoic attachment. May be important for regulating trophoblast stem cell differentiation. This Homo sapiens (Human) protein is ETS domain-containing transcription factor ERF (ERF).